The following is a 432-amino-acid chain: Glutamate-1-semialdehyde 2,1-aminomutase (432 aa).

An N6-(pyridoxal phosphate)lysine modification is found at Lys-271.

The protein belongs to the class-III pyridoxal-phosphate-dependent aminotransferase family. HemL subfamily. Homodimer. The cofactor is pyridoxal 5'-phosphate.

The protein localises to the cytoplasm. It carries out the reaction (S)-4-amino-5-oxopentanoate = 5-aminolevulinate. The protein operates within porphyrin-containing compound metabolism; protoporphyrin-IX biosynthesis; 5-aminolevulinate from L-glutamyl-tRNA(Glu): step 2/2. This Protochlamydia amoebophila (strain UWE25) protein is Glutamate-1-semialdehyde 2,1-aminomutase.